A 384-amino-acid polypeptide reads, in one-letter code: MWPESAESPAPLRTGLTTGTCATACCVAAAQALFADQQAASVSVTLPKGKVVDLPIIEYQTIDAGMKTSTIKDAGDDPDATHGATLFVELRLSPEQGVRFRAAQGVGIVTRTGLLLDVGEPAINPVPRKMMTEHLKGFAQTYHYQGGFDVSVGVINGEQIAQKTMNPRLGILGGLSILGTTGIVRPFSCAAYIASIHQGIDVARANGLTHIAATTGNASEDAIKSHYQLDDMALIEMGDFVGAVLKHIKKVEQADFAKLNSSTQLQTLSICGGFGKISKLAQHHMDLNSRASSIDLGALAKLAASLGADNALQERMTKANTSVEALSFAISDGLPLADAICQQALDFARQYIPAHIALEVWAIDRKGQFVGKALDADNSKRDEP.

It belongs to the CbiD family.

The catalysed reaction is Co-precorrin-5B + S-adenosyl-L-methionine = Co-precorrin-6A + S-adenosyl-L-homocysteine. The protein operates within cofactor biosynthesis; adenosylcobalamin biosynthesis; cob(II)yrinate a,c-diamide from sirohydrochlorin (anaerobic route): step 6/10. Its function is as follows. Catalyzes the methylation of C-1 in cobalt-precorrin-5B to form cobalt-precorrin-6A. The polypeptide is Cobalt-precorrin-5B C(1)-methyltransferase (Marinomonas sp. (strain MWYL1)).